Here is a 1077-residue protein sequence, read N- to C-terminus: Error-prone DNA polymerase (1077 aa).

It belongs to the DNA polymerase type-C family. DnaE2 subfamily.

It is found in the cytoplasm. It carries out the reaction DNA(n) + a 2'-deoxyribonucleoside 5'-triphosphate = DNA(n+1) + diphosphate. In terms of biological role, DNA polymerase involved in damage-induced mutagenesis and translesion synthesis (TLS). It is not the major replicative DNA polymerase. The chain is Error-prone DNA polymerase from Brucella abortus biovar 1 (strain 9-941).